A 256-amino-acid chain; its full sequence is MKIITCYKCVPDEQDIAVNNADGSLDFSKADAKISQYDLNAIEAACQLKQQAAEGQVTALSVGGKALTNAKGRKDVLSRGPDELIVVIDDQFEQALPQQTASALAAAAQKAGFDLILCGDGSSDLYAQQVGLLVGEILNIPAVNGVSKIISLTADTLTVERELEDETETLSIPLPAVVAVSTDINSPQIPSMKAILGAAKKPVQVWSAADIGFNAEAAWSEQQVAAPKQRERQRIVIEGDGEEQIAAFAENLRKVI.

This sequence belongs to the ETF beta-subunit/FixA family. As to quaternary structure, heterodimer of FixA and FixB.

It functions in the pathway amine and polyamine metabolism; carnitine metabolism. In terms of biological role, required for anaerobic carnitine reduction. May bring reductant to CaiA. In Escherichia coli O7:K1 (strain IAI39 / ExPEC), this protein is Protein FixA.